The following is a 202-amino-acid chain: Superoxide dismutase [Fe] (202 aa).

Positions 30, 78, 164, and 168 each coordinate Fe cation.

Belongs to the iron/manganese superoxide dismutase family. As to quaternary structure, homotetramer. Fe cation serves as cofactor.

It catalyses the reaction 2 superoxide + 2 H(+) = H2O2 + O2. Its function is as follows. Destroys superoxide anion radicals which are normally produced within the cells and which are toxic to biological systems. This Methanothermobacter marburgensis (strain ATCC BAA-927 / DSM 2133 / JCM 14651 / NBRC 100331 / OCM 82 / Marburg) (Methanobacterium thermoautotrophicum) protein is Superoxide dismutase [Fe] (sod).